Here is a 737-residue protein sequence, read N- to C-terminus: Methylcrotonoyl-CoA carboxylase subunit alpha, mitochondrial (737 aa).

The N-terminal 33 residues, 1–33, are a transit peptide targeting the mitochondrion; sequence MASRLLLLPRRRSRHGGASLLLARLLSSSSSEA. The 448-residue stretch at 38-485 folds into the Biotin carboxylation domain; sequence AVEKVLVANR…DTHFIERYQN (448 aa). Residues Lys-153, 185–246, Glu-237, and His-272 contribute to the ATP site; that span reads ANKI…PRHI. The 199-residue stretch at 157-355 folds into the ATP-grasp domain; sequence KRIMGAAGVP…LVEWQIRIAN (199 aa). Mn(2+) contacts are provided by Glu-312, Glu-326, and Asn-328. The active site involves Arg-330. The segment at 636-665 is disordered; it reads YRQTLRAEQSPDDSSQPSASSEARSHPKGS. The span at 647–657 shows a compositional bias: low complexity; that stretch reads DDSSQPSASSE. The region spanning 656–732 is the Biotinyl-binding domain; that stretch reads SEARSHPKGS…FDSSVLFTVK (77 aa). The residue at position 698 (Lys-698) is an N6-biotinyllysine.

Probably a heterodimer composed of biotin-containing alpha subunits and beta subunits. It depends on biotin as a cofactor. Mn(2+) serves as cofactor.

It localises to the mitochondrion matrix. It catalyses the reaction 3-methylbut-2-enoyl-CoA + hydrogencarbonate + ATP = 3-methyl-(2E)-glutaconyl-CoA + ADP + phosphate + H(+). Its pathway is amino-acid degradation; L-leucine degradation; (S)-3-hydroxy-3-methylglutaryl-CoA from 3-isovaleryl-CoA: step 2/3. In terms of biological role, biotin-attachment subunit of the 3-methylcrotonyl-CoA carboxylase, an enzyme that catalyzes the conversion of 3-methylcrotonyl-CoA to 3-methylglutaconyl-CoA, a critical step for leucine and isovaleric acid catabolism. This chain is Methylcrotonoyl-CoA carboxylase subunit alpha, mitochondrial (MCCA), found in Oryza sativa subsp. japonica (Rice).